The following is a 242-amino-acid chain: Large ribosomal subunit protein uL1 (242 aa).

Belongs to the universal ribosomal protein uL1 family. Part of the 50S ribosomal subunit.

In terms of biological role, binds directly to 23S rRNA. The L1 stalk is quite mobile in the ribosome, and is involved in E site tRNA release. Protein L1 is also a translational repressor protein, it controls the translation of the L11 operon by binding to its mRNA. This chain is Large ribosomal subunit protein uL1, found in Sulfurihydrogenibium sp. (strain YO3AOP1).